Consider the following 373-residue polypeptide: uncharacterized protein (373 aa).

This is an uncharacterized protein from Klebsiella pneumoniae.